Reading from the N-terminus, the 585-residue chain is MDPYYPFDALDVWEHRRFIVADSRSFITPEFPRDFWMLPVFNIPRETAAERAAVLQAQRTAAAAALENAALQAAELPVDIERRIRPIEQQVHHIADALEALETAAAAAEEADAARDAEARGEGAADGAAPSPTAGPAAAEMEVQIVRNDPPLRYDTNLPVDLLHMVYAGRGAAGSSGVVFGTWYRTIQERTIADFPLTTRSADFRDGRMSKTFMTALVLSLQSCGRLYVGQRHYSAFECAVLCLYLLYRTTHESSPDRDRAPVAFGDLLARLPRYLARLAAVIGDESGRPQYRYRDDKLPKAQFAAAGGRYEHGALATHVVIATLVRHGVLPAAPGDVPRDTSTRVNPDDVAHRDDVNRAAAAFLARGHNLFLWEDQTLLRATANTITALAVLRRLLANGNVYADRLDNRLQLGMLIPGAVPAEAIARGASGLDSGAIKSGDNNLEALCVNYVLPLYQADPTVELTQLFPGLAALCLDAQAGRPLASTRRVVDMSSGARQAALVRLTALELINRTRTNTTPVGEIINAHDALGIQYEQGPGLLAQQARIGLASNTKRFATFNVGSDYDLLYFLCLGFIPQYLSVA.

The interval 1 to 49 is interaction with major capsid protein/MCP; that stretch reads MDPYYPFDALDVWEHRRFIVADSRSFITPEFPRDFWMLPVFNIPRETAA. Residues 109–138 are disordered; it reads EEADAARDAEARGEGAADGAAPSPTAGPAA. Over residues 112 to 123 the composition is skewed to basic and acidic residues; that stretch reads DAARDAEARGEG. Residues 125–138 show a composition bias toward low complexity; it reads ADGAAPSPTAGPAA.

Belongs to the herpesviridae CVC2 protein family. Heterodimerizes with CVC1. Interacts with major capsid protein/MCP and triplex capsid protein 1/TRX1 at the pentamer vertices. Interacts with the large tegument protein/LTP.

It localises to the virion. The protein resides in the host nucleus. Capsid vertex-specific component that plays a role during viral DNA encapsidation, assuring correct genome cleavage and presumably stabilizing capsids that contain full-length viral genomes. Participates in the interaction between the capsid and the tegument through interaction with the large tegument protein/LTP. This chain is Capsid vertex component 2, found in Homo sapiens (Human).